A 116-amino-acid polypeptide reads, in one-letter code: Iron-sulfur cluster insertion protein ErpA (116 aa).

Residues cysteine 44, cysteine 108, and cysteine 110 each coordinate iron-sulfur cluster.

The protein belongs to the HesB/IscA family. Homodimer. The cofactor is iron-sulfur cluster.

Functionally, required for insertion of 4Fe-4S clusters for at least IspG. The chain is Iron-sulfur cluster insertion protein ErpA from Idiomarina loihiensis (strain ATCC BAA-735 / DSM 15497 / L2-TR).